Reading from the N-terminus, the 458-residue chain is MQQSVRKLFGTDGVRGRANFEPMTVETTVLLGKAVARVLREGRSGKHRVVVGKDTRLSGYMFENALIAGLNSMGIETLVLGPIPTPGVAFITRAYRADAGIMISASHNPYRDNGIKIFSLEGFKISDVLEQRIETMVSEADFGPLPEDHAVGKNKRVIDAMGRYVEFVKATFPKGRTLKGLKIVLDCAHGASYKVAPSVFEELDAEVICYGCEPTGININEHCGALFPQVIQKAVIEHQAHLGIALDGDGDRIIMVDEKGHIVDGDMILSICAGDLKKRSALPHNRVVATIMTNFGVLKYLEGLGLQVFTSPVGDRHVLHAMLEHEVTLGGEQSGHMIFLDYNTTGDGIVSALQVLRIMIESESMLSDLTAPIVKSPQTLINVAVREKIPLETIPLIERTLRDVQDALGPSGRILLRYSGTENICRVMVEGHKKHQVDCLAKALADVIDAELGTGSRE.

The active-site Phosphoserine intermediate is Ser-106. The Mg(2+) site is built by Ser-106, Asp-247, Asp-249, and Asp-251. Ser-106 is subject to Phosphoserine.

This sequence belongs to the phosphohexose mutase family. Mg(2+) serves as cofactor. Post-translationally, activated by phosphorylation.

The catalysed reaction is alpha-D-glucosamine 1-phosphate = D-glucosamine 6-phosphate. Functionally, catalyzes the conversion of glucosamine-6-phosphate to glucosamine-1-phosphate. The sequence is that of Phosphoglucosamine mutase from Chlamydia pneumoniae (Chlamydophila pneumoniae).